Consider the following 245-residue polypeptide: Large ribosomal subunit protein eL29 (245 aa).

Residues 1–26 (MAKSKNHTTHNQSRKWHRNGIKKPRS) are compositionally biased toward basic residues. Disordered stretches follow at residues 1 to 33 (MAKS…ESLK) and 114 to 245 (RGLR…AKAP). N6-methyllysine is present on Lys5. Ser31 carries the phosphoserine modification. N6-acetyllysine is present on Lys33. Residues 134-150 (KGKVKAQIKAQAQAQIK) are compositionally biased toward low complexity. Basic and acidic residues predominate over residues 157 to 171 (AQAETKPKAQAETKP). Low complexity-rich tracts occupy residues 172 to 226 (KAQA…ATPA) and 234 to 245 (PPKGAQPPAKAP).

Belongs to the eukaryotic ribosomal protein eL29 family. Component of the large ribosomal subunit.

It localises to the cytoplasm. Functionally, component of the large ribosomal subunit. The ribosome is a large ribonucleoprotein complex responsible for the synthesis of proteins in the cell. The protein is Large ribosomal subunit protein eL29 (RPL29) of Oryctolagus cuniculus (Rabbit).